We begin with the raw amino-acid sequence, 160 residues long: uncharacterized protein (160 aa).

The helical transmembrane segment at 47-67 (LLGGFANVAAILTPLVAVLAY) threads the bilayer.

It localises to the membrane. This is an uncharacterized protein from Sinorhizobium fredii (strain NBRC 101917 / NGR234).